A 200-amino-acid polypeptide reads, in one-letter code: Recombination protein RecR (200 aa).

The C4-type zinc-finger motif lies at 58-75 (CSNCFCLKISQTSPCNFC). The 96-residue stretch at 82-177 (SSLCIVATPK…KISRLALGMP (96 aa)) folds into the Toprim domain.

Belongs to the RecR family.

Its function is as follows. May play a role in DNA repair. It seems to be involved in an RecBC-independent recombinational process of DNA repair. It may act with RecF and RecO. This Chlamydia trachomatis serovar L2 (strain ATCC VR-902B / DSM 19102 / 434/Bu) protein is Recombination protein RecR.